We begin with the raw amino-acid sequence, 298 residues long: Acetyl-coenzyme A carboxylase carboxyl transferase subunit beta (298 aa).

The region spanning Val25–Ala295 is the CoA carboxyltransferase N-terminal domain. The Zn(2+) site is built by Cys29, Cys32, Cys48, and Cys51. A C4-type zinc finger spans residues Cys29–Cys51.

It belongs to the AccD/PCCB family. In terms of assembly, acetyl-CoA carboxylase is a heterohexamer composed of biotin carboxyl carrier protein (AccB), biotin carboxylase (AccC) and two subunits each of ACCase subunit alpha (AccA) and ACCase subunit beta (AccD). Zn(2+) serves as cofactor.

It localises to the cytoplasm. The enzyme catalyses N(6)-carboxybiotinyl-L-lysyl-[protein] + acetyl-CoA = N(6)-biotinyl-L-lysyl-[protein] + malonyl-CoA. The protein operates within lipid metabolism; malonyl-CoA biosynthesis; malonyl-CoA from acetyl-CoA: step 1/1. Component of the acetyl coenzyme A carboxylase (ACC) complex. Biotin carboxylase (BC) catalyzes the carboxylation of biotin on its carrier protein (BCCP) and then the CO(2) group is transferred by the transcarboxylase to acetyl-CoA to form malonyl-CoA. This chain is Acetyl-coenzyme A carboxylase carboxyl transferase subunit beta, found in Herpetosiphon aurantiacus (strain ATCC 23779 / DSM 785 / 114-95).